The primary structure comprises 286 residues: ATP synthase gamma chain (286 aa).

This sequence belongs to the ATPase gamma chain family. As to quaternary structure, F-type ATPases have 2 components, CF(1) - the catalytic core - and CF(0) - the membrane proton channel. CF(1) has five subunits: alpha(3), beta(3), gamma(1), delta(1), epsilon(1). CF(0) has three main subunits: a, b and c.

The protein resides in the cell inner membrane. In terms of biological role, produces ATP from ADP in the presence of a proton gradient across the membrane. The gamma chain is believed to be important in regulating ATPase activity and the flow of protons through the CF(0) complex. The polypeptide is ATP synthase gamma chain (Pseudoalteromonas translucida (strain TAC 125)).